The sequence spans 333 residues: D-2-hydroxyacid dehydrogenase (NAD+) (333 aa).

Tyr100 is a 4-methyl-2-oxopentanoate binding site. 8 residues coordinate NAD(+): His155, Ile156, Asp175, Val205, Asn211, Thr232, Arg234, and Asp258. Residue Arg234 is part of the active site. The active site involves Glu263. 4-methyl-2-oxopentanoate is bound at residue His295. The Proton donor role is filled by His295.

It belongs to the D-isomer specific 2-hydroxyacid dehydrogenase family. Homodimer.

It catalyses the reaction a (2R)-2-hydroxycarboxylate + NAD(+) = a 2-oxocarboxylate + NADH + H(+). The enzyme catalyses (2R)-hydroxy-4-methylpentanoate + NAD(+) = 4-methyl-2-oxopentanoate + NADH + H(+). The catalysed reaction is (R)-3-phenyllactate + NAD(+) = 3-phenylpyruvate + NADH + H(+). Its activity is regulated as follows. Completely inhibited In the presence of 0.1 mM Hg(2+). No influence on the activity could be detected with Mg(2+) and Ca(2+) and only very weak effects with Cd(2+), Co(2+) and Mn(2+). Reducing agents and thiol group reagents do not affect catalytic activity. Functionally, catalyzes the NADH-dependent reversible reduction of various 2-ketocarboxylic acids to the corresponding D-2-hydroxycarboxylic acids. In vitro can use various substrates, including 4-methyl-2-oxopentanoate (2-oxoisocaproate), 2-oxopentanoate, 2-oxohexanoate and phenylpyruvate. The chain is D-2-hydroxyacid dehydrogenase (NAD+) from Lacticaseibacillus paracasei (Lactobacillus paracasei).